We begin with the raw amino-acid sequence, 1287 residues long: Vacuolating cytotoxin autotransporter (1287 aa).

The N-terminal stretch at 1 to 33 is a signal peptide; sequence MEIQQTHRKINRPLVSLALVGALVSITPQQSHA. Residues 326-381 form a disordered region; that stretch reads PPEGGYKDKPNNTPSQSGAKNDKQESSQNNSNTQVINPPNSTQKTEVQPTQVIDGP. A compositionally biased stretch (polar residues) spans 351-376; that stretch reads SSQNNSNTQVINPPNSTQKTEVQPTQ. The 274-residue stretch at 1014-1287 folds into the Autotransporter domain; sequence KYEKPTNVWA…ASNLGMRYSF (274 aa).

It is found in the periplasm. The protein localises to the secreted. The protein resides in the cell surface. It localises to the cell outer membrane. In terms of biological role, induces vacuolation of eukaryotic cells. Causes ulceration and gastric lesions. The protein is Vacuolating cytotoxin autotransporter (vacA) of Helicobacter pylori (Campylobacter pylori).